Consider the following 194-residue polypeptide: Archaetidylinositol phosphate synthase (194 aa).

Transmembrane regions (helical) follow at residues 32–51 (IYTL…WLYI) and 58–78 (LLIA…RFTG). Asp67, Asp70, Asp88, and Asp92 together coordinate Mg(2+). Asp92 serves as the catalytic Proton acceptor. 3 helical membrane-spanning segments follow: residues 103–123 (LYIA…GLIV), 150–170 (IAIL…LALA), and 172–192 (AAAV…AGEL).

It belongs to the CDP-alcohol phosphatidyltransferase class-I family. Mn(2+) is required as a cofactor. Requires Mg(2+) as cofactor.

The protein resides in the cell membrane. The catalysed reaction is CDP-2,3-bis-O-(phytanyl)-sn-glycerol + 1D-myo-inositol 3-phosphate = saturated 1-archaetidyl-1D-myo-inositol 3-phosphate + CMP + H(+). Its pathway is lipid metabolism; phospholipid metabolism. In terms of biological role, catalyzes the formation of archaetidylinositol phosphate (AIP) from CDP-archaeol (CDP-ArOH or CDP-2,3-bis-(O-phytanyl)-sn-glycerol) and 1L-myo-inositol 1-phosphate (IP or 1D-myo-inositol 3-phosphate). AIP is a precursor of archaetidyl-myo-inositol (AI), an ether-type inositol phospholipid ubiquitously distributed in archaea membranes and essential for glycolipid biosynthesis in archaea. This is Archaetidylinositol phosphate synthase from Aeropyrum pernix (strain ATCC 700893 / DSM 11879 / JCM 9820 / NBRC 100138 / K1).